Reading from the N-terminus, the 415-residue chain is YDG domain-containing protein At5g47160 (415 aa).

Positions 163-186 are disordered; sequence KKLSNASRLRANAHRPTQHKDERR. Positions 262–407 constitute a YDG domain; it reads GSVPGIKVGD…NILFKFKLRR (146 aa).

It is found in the nucleus. The chain is YDG domain-containing protein At5g47160 from Arabidopsis thaliana (Mouse-ear cress).